Reading from the N-terminus, the 361-residue chain is Biotin synthase (361 aa).

The Radical SAM core domain maps to 47 to 278 (VHGDEVALCG…AAHIFVMGGR (232 aa)). Residues Cys-65, Cys-69, and Cys-72 each coordinate [4Fe-4S] cluster. The [2Fe-2S] cluster site is built by Ser-110, Cys-143, and Cys-203.

It belongs to the radical SAM superfamily. Biotin synthase family. As to quaternary structure, homodimer. The cofactor is [4Fe-4S] cluster. [2Fe-2S] cluster is required as a cofactor.

It catalyses the reaction (4R,5S)-dethiobiotin + (sulfur carrier)-SH + 2 reduced [2Fe-2S]-[ferredoxin] + 2 S-adenosyl-L-methionine = (sulfur carrier)-H + biotin + 2 5'-deoxyadenosine + 2 L-methionine + 2 oxidized [2Fe-2S]-[ferredoxin]. It functions in the pathway cofactor biosynthesis; biotin biosynthesis; biotin from 7,8-diaminononanoate: step 2/2. In terms of biological role, catalyzes the conversion of dethiobiotin (DTB) to biotin by the insertion of a sulfur atom into dethiobiotin via a radical-based mechanism. In Anaeromyxobacter dehalogenans (strain 2CP-C), this protein is Biotin synthase.